We begin with the raw amino-acid sequence, 136 residues long: Histone H3.3 (136 aa).

Residues 1 to 43 form a disordered region; it reads MARTKQTARKSTGGKAPRKQLATKAARKSAPSTGGVKKPHRYR. Asymmetric dimethylarginine; by PRMT6 is present on Arg-3. Thr-4 bears the Phosphothreonine; by HASPIN and VRK1 mark. At Lys-5 the chain carries Allysine; alternate. At Lys-5 the chain carries N6,N6,N6-trimethyllysine; alternate. Lys-5 bears the N6,N6-dimethyllysine; alternate mark. N6-(2-hydroxyisobutyryl)lysine; alternate is present on Lys-5. Lys-5 carries the post-translational modification N6-acetyllysine; alternate. At Lys-5 the chain carries N6-methyllysine; alternate. Gln-6 is subject to 5-glutamyl dopamine; alternate. Gln-6 carries the 5-glutamyl serotonin; alternate modification. Thr-7 carries the phosphothreonine; by PKC modification. An N6-(2-hydroxyisobutyryl)lysine; alternate modification is found at Lys-10. Lys-10 bears the N6-lactoyllysine; alternate mark. Lys-10 is subject to N6-methylated lysine. Ser-11 carries the ADP-ribosylserine; alternate modification. The residue at position 11 (Ser-11) is a Phosphoserine; alternate; by AURKB, AURKC, RPS6KA3, RPS6KA4 and RPS6KA5. Thr-12 carries the phosphothreonine; by PKC modification. An N6-(2-hydroxyisobutyryl)lysine; alternate modification is found at Lys-15. Residue Lys-15 is modified to N6-lactoyllysine; alternate. The residue at position 15 (Lys-15) is an N6-acetyllysine. Residue Lys-15 is modified to N6-glutaryllysine; alternate. An Asymmetric dimethylarginine modification is found at Arg-18. An N6-(2-hydroxyisobutyryl)lysine; alternate mark is found at Lys-19, Lys-24, and Lys-28. Position 19 is an N6-acetyllysine; alternate (Lys-19). N6-lactoyllysine; alternate occurs at positions 19, 24, and 28. An N6-glutaryllysine; alternate mark is found at Lys-19, Lys-24, and Lys-28. 2 positions are modified to N6-butyryllysine; alternate: Lys-19 and Lys-24. Lys-19 is subject to N6-methylated lysine; alternate. Position 24 is an N6-acetyllysine (Lys-24). Lys-28 carries the post-translational modification N6-acetyllysine; alternate. N6-methylated lysine; alternate is present on Lys-28. At Ser-29 the chain carries ADP-ribosylserine; alternate. Ser-29 carries the post-translational modification Phosphoserine; alternate; by AURKB, AURKC and RPS6KA5. At Lys-37 the chain carries N6-(2-hydroxyisobutyryl)lysine; alternate. An N6-acetyllysine; alternate modification is found at Lys-37. Position 37 is an N6-methylated lysine; alternate (Lys-37). Phosphotyrosine is present on Tyr-42. Position 57 is an N6-(2-hydroxyisobutyryl)lysine; alternate (Lys-57). Lys-57 carries the post-translational modification N6-lactoyllysine; alternate. Position 57 is an N6-glutaryllysine; alternate (Lys-57). N6-succinyllysine; alternate is present on Lys-57. At Ser-58 the chain carries Phosphoserine. N6-(2-hydroxyisobutyryl)lysine; alternate is present on residues Lys-65 and Lys-80. N6-methylated lysine is present on residues Lys-65 and Lys-80. N6-lactoyllysine; alternate is present on Lys-80. Residue Lys-80 is modified to N6-glutaryllysine; alternate. An N6-succinyllysine; alternate modification is found at Lys-80. Thr-81 bears the Phosphothreonine mark. N6-acetyllysine; alternate occurs at positions 116 and 123. 2 positions are modified to N6-glutaryllysine; alternate: Lys-116 and Lys-123. Lys-123 is modified (N6-(2-hydroxyisobutyryl)lysine; alternate). Lys-123 carries the N6-methyllysine; alternate modification. The residue at position 123 (Lys-123) is an N6-succinyllysine; alternate.

Belongs to the histone H3 family. In terms of assembly, the nucleosome is a histone octamer containing two molecules each of H2A, H2B, H3 and H4 assembled in one H3-H4 heterotetramer and two H2A-H2B heterodimers. The octamer wraps approximately 147 bp of DNA. Interacts with zmynd11; when trimethylated at 'Lys-36' (H3.3K36me3). Acetylation is generally linked to gene activation. Acetylation on Lys-19 (H3K18ac) and Lys-24 (H3K24ac) favors methylation at Arg-18 (H3R17me). Acetylation at Lys-123 (H3K122ac) by EP300/p300 plays a central role in chromatin structure: localizes at the surface of the histone octamer and stimulates transcription, possibly by promoting nucleosome instability. In terms of processing, asymmetric dimethylation at Arg-18 (H3R17me2a) is linked to gene activation. Asymmetric dimethylation at Arg-3 (H3R2me2a) by prmt6 is linked to gene repression and is mutually exclusive with H3 Lys-5 methylation (H3K4me2 and H3K4me3). H3R2me2a is present at the 3' of genes regardless of their transcription state and is enriched on inactive promoters, while it is absent on active promoters. Post-translationally, specifically enriched in modifications associated with active chromatin such as methylation at Lys-5 (H3K4me), Lys-37 (H3K36me) and Lys-80 (H3K79me) are linked to gene activation. Methylation at Lys-5 (H3K4me) facilitates subsequent acetylation of H3 and H4. Methylation at Lys-80 (H3K79me) is associated with DNA double-strand break (DSB) responses and is a specific target for tp53bp1. Methylation at Lys-10 (H3K9me) and Lys-28 (H3K27me) are linked to gene repression. Methylation at Lys-10 (H3K9me) is a specific target for HP1 proteins (cbx1, cbx3 and cbx5) and prevents subsequent phosphorylation at Ser-11 (H3S10ph) and acetylation of H3 and H4. Methylation at Lys-5 (H3K4me) and Lys-80 (H3K79me) require preliminary monoubiquitination of H2B at 'Lys-120'. Phosphorylated at Thr-4 (H3T3ph) by VRK1. Phosphorylated at Thr-4 (H3T3ph) by HASPIN during prophase and dephosphorylated during anaphase. Phosphorylation at Ser-11 (H3S10ph) by aurkb is crucial for chromosome condensation and cell-cycle progression during mitosis and meiosis. In addition phosphorylation at Ser-11 (H3S10ph) by RPS6KA4 and RPS6KA5 is important during interphase because it enables the transcription of genes following external stimulation, like mitogens, stress, growth factors or UV irradiation and result in the activation of genes, such as c-fos and c-jun. Phosphorylation at Ser-11 (H3S10ph), which is linked to gene activation, prevents methylation at Lys-10 (H3K9me) but facilitates acetylation of H3 and H4. Phosphorylation at Ser-11 (H3S10ph) by aurkb mediates the dissociation of HP1 proteins (cbx1, cbx3 and cbx5) from heterochromatin. Phosphorylation at Ser-11 (H3S10ph) is also an essential regulatory mechanism for neoplastic cell transformation. Phosphorylated at Ser-29 (H3S28ph) by map3k20 isoform 1, rps6ka5 or aurkb during mitosis or upon ultraviolet B irradiation. Phosphorylation at Thr-7 (H3T6ph) by prkcb is a specific tag for epigenetic transcriptional activation that prevents demethylation of Lys-5 (H3K4me) by lsd1/kdm1a. At centromeres, specifically phosphorylated at Thr-12 (H3T11ph) from prophase to early anaphase, by DAPK3 and PKN1. Phosphorylation at Thr-12 (H3T11ph) by PKN1 or isoform M2 of PKM (PKM2) is a specific tag for epigenetic transcriptional activation that promotes demethylation of Lys-10 (H3K9me) by kdm4c/jmjd2c. Phosphorylation at Tyr-42 (H3Y41ph) by jak2 promotes exclusion of cbx5 (HP1 alpha) from chromatin. Phosphorylation on Ser-32 (H3S31ph) is specific to regions bordering centromeres in metaphase chromosomes. In terms of processing, monoubiquitinated by rag1 in lymphoid cells, monoubiquitination is required for V(D)J recombination. Post-translationally, lysine deamination at Lys-5 (H3K4all) to form allysine only takes place on H3K4me3 and results in gene repression. Butyrylation of histones marks active promoters and competes with histone acetylation. It is present during late spermatogenesis. In terms of processing, succinylation at Lys-80 (H3K79succ) by KAT2A takes place with a maximum frequency around the transcription start sites of genes. It gives a specific tag for epigenetic transcription activation. Desuccinylation at Lys-123 (H3K122succ) by SIRT7 in response to DNA damage promotes chromatin condensation and double-strand breaks (DSBs) repair. Post-translationally, serine ADP-ribosylation constitutes the primary form of ADP-ribosylation of proteins in response to DNA damage. Serine ADP-ribosylation at Ser-11 (H3S10ADPr) is mutually exclusive with phosphorylation at Ser-11 (H3S10ph) and impairs acetylation at Lys-10 (H3K9ac). Serotonylated by TGM2 at Gln-6 (H3Q5ser) during serotonergic neuron differentiation. H3Q5ser is associated with trimethylation of Lys-5 (H3K4me3) and enhances general transcription factor IID (TFIID) complex-binding to H3K4me3, thereby facilitating transcription. In terms of processing, dopaminylated by TGM2 at Gln-6 (H3Q5dop) in ventral tegmental area (VTA) neurons. H3Q5dop mediates neurotransmission-independent role of nuclear dopamine by regulating relapse-related transcriptional plasticity in the reward system. Post-translationally, lactylated in macrophages by EP300/P300 by using lactoyl-CoA directly derived from endogenous or exogenous lactate, leading to stimulates gene transcription.

Its subcellular location is the nucleus. The protein localises to the chromosome. Variant histone H3 which replaces conventional H3 in a wide range of nucleosomes in active genes. Constitutes the predominant form of histone H3 in non-dividing cells and is incorporated into chromatin independently of DNA synthesis. Deposited at sites of nucleosomal displacement throughout transcribed genes, suggesting that it represents an epigenetic imprint of transcriptionally active chromatin. Nucleosomes wrap and compact DNA into chromatin, limiting DNA accessibility to the cellular machineries which require DNA as a template. Histones thereby play a central role in transcription regulation, DNA repair, DNA replication and chromosomal stability. DNA accessibility is regulated via a complex set of post-translational modifications of histones, also called histone code, and nucleosome remodeling. The sequence is that of Histone H3.3 (h3f3a) from Danio rerio (Zebrafish).